Consider the following 736-residue polypeptide: Catalase-peroxidase 2 (736 aa).

A cross-link (tryptophyl-tyrosyl-methioninium (Trp-Tyr) (with M-253)) is located at residues 91–227; that stretch reads WHSAGTYRMG…LAAVQMGLIY (137 aa). His-92 serves as the catalytic Proton acceptor. The segment at residues 227–253 is a cross-link (tryptophyl-tyrosyl-methioninium (Tyr-Met) (with W-91)); it reads YVNPEGPDGNPDPVAAAYDIREVFGRM. His-268 is a binding site for heme b.

It belongs to the peroxidase family. Peroxidase/catalase subfamily. As to quaternary structure, homodimer or homotetramer. The cofactor is heme b. Formation of the three residue Trp-Tyr-Met cross-link is important for the catalase, but not the peroxidase activity of the enzyme.

The enzyme catalyses H2O2 + AH2 = A + 2 H2O. The catalysed reaction is 2 H2O2 = O2 + 2 H2O. Bifunctional enzyme with both catalase and broad-spectrum peroxidase activity. Shows peroxidase specificity towards odianisidine, ABTS and pyrogallol, but methoxyphenol and 2-chloronaphthol are not peroxidized. In Burkholderia cenocepacia (strain ATCC BAA-245 / DSM 16553 / LMG 16656 / NCTC 13227 / J2315 / CF5610) (Burkholderia cepacia (strain J2315)), this protein is Catalase-peroxidase 2.